The chain runs to 445 residues: Cyclic GMP-AMP synthase-like receptor 1 (445 aa).

Mg(2+)-binding residues include Glu-70, Asp-72, and Asp-186. 70–72 (EYD) provides a ligand contact to ATP. GTP contacts are provided by residues Asp-186 and 232–239 (RTSFYEAE). ATP contacts are provided by residues 236-239 (YEAE), Lys-257, and 270-274 (SYHIK). The tract at residues 357–445 (LNDDNENSVH…KSKTTTPKPS (89 aa)) is disordered. The span at 377–398 (QKMEKTSTESEQKKPTETKPNA) shows a compositional bias: basic and acidic residues. The segment covering 435–445 (TKSKTTTPKPS) has biased composition (low complexity).

It belongs to the mab-21 family. It depends on Mg(2+) as a cofactor. Requires Mn(2+) as cofactor.

It catalyses the reaction GTP + ATP = 3',2'-cGAMP + 2 diphosphate. The catalysed reaction is GTP + ATP = pppA(2'-5')pG + diphosphate. The enzyme catalyses pppA(2'-5')pG = 3',2'-cGAMP + diphosphate. The enzyme activity is specifically activated by double-stranded RNA (dsRNA). Functionally, nucleotidyltransferase that catalyzes the formation of cyclic GMP-AMP (3',2'-cGAMP) from ATP and GTP and plays a key role in innate immunity. Synthesizes 3',2'-cGAMP in a two-step reaction through production of the linear intermediate pppA(2'-5')pG. Acts as a key sensor of double-stranded RNA (dsRNA), the presence of dsRNA in the cytoplasm being a danger signal that triggers the immune responses. Directly binds dsRNA, activating the nucleotidyltransferase activity, leading to synthesis of 3',2'-cGAMP, a second messenger that binds to and activates Sting, thereby triggering the antiviral immune response via activation of the NF-kappa-B transcription factor Rel (Relish). The sequence is that of Cyclic GMP-AMP synthase-like receptor 1 from Drosophila erecta (Fruit fly).